The sequence spans 181 residues: Major urinary protein (181 aa).

The signal sequence occupies residues 1–19; sequence MKLLLLLLCLGLTLVCGHA. N54 carries N-linked (GlcNAc...) asparagine glycosylation. C83 and C176 are joined by a disulfide.

It belongs to the calycin superfamily. Lipocalin family. Abundant in the urine of adult male rats but absent from that of females.

It localises to the cytoplasm. The protein resides in the cytosol. It is found in the secreted. Its function is as follows. Major urinary proteins (Mups) bind and release pheromones. They may also protect pheromones from oxidation. In this context, they play a role in the regulation of social behaviors, such as aggression, mating, pup-suckling, territory establishment and dominance. Acts as a kairomone, detected by the prey vomeronasal organ and inducing fear reactions in mice. The sequence is that of Major urinary protein from Rattus norvegicus (Rat).